Consider the following 77-residue polypeptide: MARVCKVTGKRPMSGNNVSHANNKTKRRFLPNLQSRRFWVESENRWVRLRVSNAALRTIDKVGIDVVLADLRARGEA.

A disordered region spans residues 1–26 (MARVCKVTGKRPMSGNNVSHANNKTK).

The protein belongs to the bacterial ribosomal protein bL28 family.

The chain is Large ribosomal subunit protein bL28 from Neisseria gonorrhoeae (strain ATCC 700825 / FA 1090).